The chain runs to 174 residues: Membrane protein NfeD2 (174 aa).

3 helical membrane-spanning segments follow: residues 16 to 36 (LIIAGSLTLLFLFFGDVFSGL), 47 to 67 (LVLSFFTCFSAGGYIGELVLP), and 72 to 92 (LIALLSCILSIMLVVLLHIFV).

The protein belongs to the NfeD family.

The protein resides in the cell membrane. It localises to the membrane raft. Its function is as follows. Plays a role in assembly of FloT membrane rafts, probably recruited to rafts by FloT. This chain is Membrane protein NfeD2, found in Bacillus subtilis (strain 168).